Reading from the N-terminus, the 730-residue chain is Catalase-peroxidase 1 (730 aa).

Positions 92 to 217 (WHSAGTYRTT…LGAAVMGLIY (126 aa)) form a cross-link, tryptophyl-tyrosyl-methioninium (Trp-Tyr) (with M-243). Catalysis depends on His93, which acts as the Proton acceptor. A cross-link (tryptophyl-tyrosyl-methioninium (Tyr-Met) (with W-92)) is located at residues 217–243 (YVDPEGPNGNPDPLASAENIRESFGRM). His258 provides a ligand contact to heme b.

This sequence belongs to the peroxidase family. Peroxidase/catalase subfamily. Homodimer or homotetramer. The cofactor is heme b. Formation of the three residue Trp-Tyr-Met cross-link is important for the catalase, but not the peroxidase activity of the enzyme.

The enzyme catalyses H2O2 + AH2 = A + 2 H2O. It catalyses the reaction 2 H2O2 = O2 + 2 H2O. Its function is as follows. Bifunctional enzyme with both catalase and broad-spectrum peroxidase activity. The polypeptide is Catalase-peroxidase 1 (Haloarcula marismortui (strain ATCC 43049 / DSM 3752 / JCM 8966 / VKM B-1809) (Halobacterium marismortui)).